The following is a 626-amino-acid chain: Chaperone protein HtpG (626 aa).

An a; substrate-binding region spans residues 1–339; the sequence is MSTNQETRGF…SNDLPLNVSR (339 aa). Positions 340–555 are b; the sequence is EILQDNKVTA…NDQMTTQMAK (216 aa). The segment at 556–626 is c; sequence LFAAAGQPVP…FIKRVNNLLG (71 aa).

Belongs to the heat shock protein 90 family. As to quaternary structure, homodimer.

It is found in the cytoplasm. Its function is as follows. Molecular chaperone. Has ATPase activity. This is Chaperone protein HtpG from Histophilus somni (strain 2336) (Haemophilus somnus).